A 316-amino-acid chain; its full sequence is Secondary metabolism regulator LAE1 (316 aa).

Belongs to the methyltransferase superfamily. LaeA methyltransferase family. As to quaternary structure, component of the heterotrimeric velvet complex composed of LAE1, VEL1 and VEL2; VEL1 acting as a bridging protein between LAE1 and VEL2. Interacts with VEL1.

The protein localises to the nucleus. The enzyme catalyses L-methionyl-[protein] + S-adenosyl-L-methionine = S-methyl-L-methionyl-[protein] + S-adenosyl-L-homocysteine. Methyltransferase that performs automethylation. No other methyl-accepting substrate has been identified yet. Component of the velvet transcription factor complex that acts as a global regulator for secondary metabolite gene expression. Controls the expression of the gibberellins gene clusters, but does not affect bikaverin production. Controls the expression of the fusaric acid gene cluster. Acts as a virulence factors during infection, most likely through activation of gibberellins biosynthesis. The chain is Secondary metabolism regulator LAE1 from Gibberella fujikuroi (strain CBS 195.34 / IMI 58289 / NRRL A-6831) (Bakanae and foot rot disease fungus).